We begin with the raw amino-acid sequence, 1416 residues long: Nucleoporin NUP170 (1416 aa).

Disordered regions lie at residues 1 to 26 (MEPM…ANPA) and 50 to 69 (APLA…LMTP).

The protein belongs to the non-repetitive/WGA-negative nucleoporin family. In terms of assembly, component of the nuclear pore complex (NPC). NPC constitutes the exclusive means of nucleocytoplasmic transport. NPCs allow the passive diffusion of ions and small molecules and the active, nuclear transport receptor-mediated bidirectional transport of macromolecules such as proteins, RNAs, ribonucleoparticles (RNPs), and ribosomal subunits across the nuclear envelope. Due to its 8-fold rotational symmetry, all subunits are present with 8 copies or multiples thereof. Part of a tetrameric NUP192-NUP170-NIC96-NUP53 or NUP188-NUP170-NIC96-NUP53 module.

Its subcellular location is the nucleus. The protein localises to the nuclear pore complex. The protein resides in the nucleus membrane. In terms of biological role, functions as a component of the nuclear pore complex (NPC). NPC components, collectively referred to as nucleoporins (NUPs), can play the role of both NPC structural components and of docking or interaction partners for transiently associated nuclear transport factors. NUP170 probably plays an important role in NPC assembly and organization. In Chaetomium thermophilum (strain DSM 1495 / CBS 144.50 / IMI 039719) (Thermochaetoides thermophila), this protein is Nucleoporin NUP170 (NUP170).